The following is a 108-amino-acid chain: MGLSSNSAVRVEWIAAVTFAAGTAALGYLAYKKFYAKENRTKAMVNLQIQKDNPKVVHAFDMEDLGDKAVYCRCWRSKKFPFCDGAHIKHNEETGDNVGPLIIKKKET.

Residues 14–31 (IAAVTFAAGTAALGYLAY) traverse the membrane as a helical; Signal-anchor for type III membrane protein segment. The Cytoplasmic portion of the chain corresponds to 32 to 108 (KKFYAKENRT…GPLIIKKKET (77 aa)). Lys42 participates in a covalent cross-link: Glycyl lysine isopeptide (Lys-Gly) (interchain with G-Cter in ubiquitin). Lys55 acts as the Schiff-base intermediate with pyridoxal 5'-phosphate in catalysis. An N6-acetyllysine; alternate mark is found at Lys55 and Lys68. Residues Lys55 and Lys68 each participate in a glycyl lysine isopeptide (Lys-Gly) (interchain with G-Cter in ubiquitin); alternate cross-link. Cys72 and Cys74 together coordinate [2Fe-2S] cluster. Glycyl lysine isopeptide (Lys-Gly) (interchain with G-Cter in ubiquitin) cross-links involve residues Lys78 and Lys79. Positions 83 and 87 each coordinate [2Fe-2S] cluster. Residue Lys89 forms a Glycyl lysine isopeptide (Lys-Gly) (interchain with G-Cter in ubiquitin) linkage. Lys104 carries the N6-acetyllysine; alternate modification. A Glycyl lysine isopeptide (Lys-Gly) (interchain with G-Cter in ubiquitin); alternate cross-link involves residue Lys104. Glycyl lysine isopeptide (Lys-Gly) (interchain with G-Cter in ubiquitin) cross-links involve residues Lys105 and Lys106.

Belongs to the CISD protein family. As to quaternary structure, homodimer. [2Fe-2S] cluster serves as cofactor. Requires pyridoxal 5'-phosphate as cofactor. Ubiquitinated by PRKN during mitophagy, leading to its degradation and enhancement of mitophagy. Deubiquitinated by USP30. Liver, adipose, skeletal muscle and heart (at protein level). Widely expressed. Expressed at the highest levels in the heart.

Its subcellular location is the mitochondrion outer membrane. The catalysed reaction is L-cysteine + 2-oxoglutarate = 2-oxo-3-sulfanylpropanoate + L-glutamate. Functionally, L-cysteine transaminase that catalyzes the reversible transfer of the amino group from L-cysteine to the alpha-keto acid 2-oxoglutarate to respectively form 2-oxo-3-sulfanylpropanoate and L-glutamate. The catalytic cycle occurs in the presence of pyridoxal 5'-phosphate (PLP) cofactor that facilitates transamination by initially forming an internal aldimine with the epsilon-amino group of active site Lys-55 residue on the enzyme (PLP-enzyme aldimine), subsequently displaced by formation of an external aldimine with the substrate amino group (PLP-L-cysteine aldimine). The external aldimine is further deprotonated to form a carbanion intermediate, which in the presence of 2-oxoglutarate regenerates PLP yielding final products 2-oxo-3-sulfanylpropanoate and L-glutamate. The proton transfer in carbanion intermediate is suggested to be controlled by the active site lysine residue, whereas PLP stabilizes carbanion structure through electron delocalization, also known as the electron sink effect. Plays a key role in regulating maximal capacity for electron transport and oxidative phosphorylation. May be involved in iron-sulfur cluster shuttling and/or in redox reactions. Can transfer the [2Fe-2S] cluster to an apo-acceptor protein only when in the oxidation state, likely serving as a redox sensor that regulates mitochondrial iron-sulfur cluster assembly and iron trafficking upon oxidative stress. This chain is CDGSH iron-sulfur domain-containing protein 1 (Cisd1), found in Mus musculus (Mouse).